We begin with the raw amino-acid sequence, 207 residues long: Transcriptional regulator GfcR (207 aa).

It belongs to the purine/pyrimidine phosphoribosyltransferase family. GfcR subfamily.

The chain is Transcriptional regulator GfcR from Methanocella arvoryzae (strain DSM 22066 / NBRC 105507 / MRE50).